The sequence spans 180 residues: Endoribonuclease YbeY (180 aa).

Histidine 118, histidine 122, and histidine 128 together coordinate Zn(2+).

The protein belongs to the endoribonuclease YbeY family. The cofactor is Zn(2+).

The protein localises to the cytoplasm. Its function is as follows. Single strand-specific metallo-endoribonuclease involved in late-stage 70S ribosome quality control and in maturation of the 3' terminus of the 16S rRNA. The sequence is that of Endoribonuclease YbeY from Rhodococcus erythropolis (strain PR4 / NBRC 100887).